The sequence spans 864 residues: Nitrate reductase [NADH] (864 aa).

Cys139 serves as a coordination point for Mo-molybdopterin. The region spanning 497–572 is the Cytochrome b5 heme-binding domain; that stretch reads PRQYTMEEVA…LAQYYIGDLV (76 aa). Heme-binding residues include His532 and His555. The FAD-binding FR-type domain maps to 606–718; it reads RQKVKLPLIE…KGPLGHFVYD (113 aa). FAD contacts are provided by residues 658-661, 675-679, Phe680, Phe687, 692-694, and Thr746; these read RAYT, LIKVY, and KMS.

This sequence belongs to the nitrate reductase family. As to quaternary structure, homodimer. FAD is required as a cofactor. It depends on heme as a cofactor. The cofactor is Mo-molybdopterin.

It carries out the reaction nitrite + NAD(+) + H2O = nitrate + NADH + H(+). Its function is as follows. Nitrate reductase is a key enzyme involved in the first step of nitrate assimilation in plants, fungi and bacteria. The protein is Nitrate reductase [NADH] (NITA) of Volvox carteri (Green alga).